The primary structure comprises 382 residues: Polyadenylate-binding protein 5 (382 aa).

4 consecutive RRM domains span residues 18–96, 106–182, 199–276, and 302–378; these read AALY…WSQP, GNIF…RFKF, TNVF…RAQK, and VPIY…LGQA.

It is found in the cytoplasm. Its function is as follows. Binds the poly(A) tail of mRNA. May be involved in cytoplasmic regulatory processes of mRNA metabolism. Can probably bind to cytoplasmic RNA sequences other than poly(A) in vivo. In Macaca mulatta (Rhesus macaque), this protein is Polyadenylate-binding protein 5 (PABPC5).